A 433-amino-acid polypeptide reads, in one-letter code: GTPase Der (433 aa).

2 EngA-type G domains span residues 5–167 and 174–349; these read KKVL…GEVG and IKVG…DQLE. GTP-binding positions include 11–18, 58–62, 119–122, 180–187, 227–231, and 292–295; these read GRPNVGKS, DTGGF, NKVD, GKPNSGKS, DTAGI, and SKWD. Residues 349-429 enclose the KH-like domain; it reads ELKTSTPDLN…PILVELKEKI (81 aa).

It belongs to the TRAFAC class TrmE-Era-EngA-EngB-Septin-like GTPase superfamily. EngA (Der) GTPase family. In terms of assembly, associates with the 50S ribosomal subunit.

In terms of biological role, GTPase that plays an essential role in the late steps of ribosome biogenesis. This is GTPase Der from Borreliella burgdorferi (strain ATCC 35210 / DSM 4680 / CIP 102532 / B31) (Borrelia burgdorferi).